Reading from the N-terminus, the 190-residue chain is MIGNLSGIVDEVRSDHIILNVNDVGYMVYLSAKTLNACSIGSRVKLLIETYANNRENVAQLYGFISKEEQQCLRLLVKVSGVSYKTAMSILGKLTPEQLFLAIMNEDKVALKMSGLGLKLINRIITELSGKVSKLEINNNNFHPINEDALSALINLGYEKMKAYDTIKKYRPNLDTKDIIRMALKELSIL.

Residues 1-65 (MIGNLSGIVD…ENVAQLYGFI (65 aa)) are domain I. The tract at residues 66 to 143 (SKEEQQCLRL…KLEINNNNFH (78 aa)) is domain II. The segment at 144–147 (PINE) is flexible linker. The interval 147-190 (EDALSALINLGYEKMKAYDTIKKYRPNLDTKDIIRMALKELSIL) is domain III.

It belongs to the RuvA family. Homotetramer. Forms an RuvA(8)-RuvB(12)-Holliday junction (HJ) complex. HJ DNA is sandwiched between 2 RuvA tetramers; dsDNA enters through RuvA and exits via RuvB. An RuvB hexamer assembles on each DNA strand where it exits the tetramer. Each RuvB hexamer is contacted by two RuvA subunits (via domain III) on 2 adjacent RuvB subunits; this complex drives branch migration. In the full resolvosome a probable DNA-RuvA(4)-RuvB(12)-RuvC(2) complex forms which resolves the HJ.

The protein localises to the cytoplasm. Its function is as follows. The RuvA-RuvB-RuvC complex processes Holliday junction (HJ) DNA during genetic recombination and DNA repair, while the RuvA-RuvB complex plays an important role in the rescue of blocked DNA replication forks via replication fork reversal (RFR). RuvA specifically binds to HJ cruciform DNA, conferring on it an open structure. The RuvB hexamer acts as an ATP-dependent pump, pulling dsDNA into and through the RuvAB complex. HJ branch migration allows RuvC to scan DNA until it finds its consensus sequence, where it cleaves and resolves the cruciform DNA. The chain is Holliday junction branch migration complex subunit RuvA from Wolbachia pipientis wMel.